Reading from the N-terminus, the 475-residue chain is Kynureninase (475 aa).

Residues leucine 142, threonine 143, 170–173 (FPSD), aspartate 255, histidine 258, and tyrosine 280 each bind pyridoxal 5'-phosphate. N6-(pyridoxal phosphate)lysine is present on lysine 281. Tryptophan 320 and asparagine 348 together coordinate pyridoxal 5'-phosphate.

Belongs to the kynureninase family. Homodimer. The cofactor is pyridoxal 5'-phosphate.

It is found in the cytoplasm. It catalyses the reaction L-kynurenine + H2O = anthranilate + L-alanine + H(+). The enzyme catalyses 3-hydroxy-L-kynurenine + H2O = 3-hydroxyanthranilate + L-alanine + H(+). The protein operates within amino-acid degradation; L-kynurenine degradation; L-alanine and anthranilate from L-kynurenine: step 1/1. Its pathway is cofactor biosynthesis; NAD(+) biosynthesis; quinolinate from L-kynurenine: step 2/3. Catalyzes the cleavage of L-kynurenine (L-Kyn) and L-3-hydroxykynurenine (L-3OHKyn) into anthranilic acid (AA) and 3-hydroxyanthranilic acid (3-OHAA), respectively. This is Kynureninase (bna5) from Botryotinia fuckeliana (strain B05.10) (Noble rot fungus).